The following is a 521-amino-acid chain: Maturase K (521 aa).

It belongs to the intron maturase 2 family. MatK subfamily.

Its subcellular location is the plastid. The protein localises to the chloroplast. In terms of biological role, usually encoded in the trnK tRNA gene intron. Probably assists in splicing its own and other chloroplast group II introns. This chain is Maturase K, found in Kniphofia uvaria (Red-hot poker).